The primary structure comprises 261 residues: tRNA pseudouridine synthase A (261 aa).

Aspartate 51 functions as the Nucleophile in the catalytic mechanism. Residue tyrosine 109 coordinates substrate.

Belongs to the tRNA pseudouridine synthase TruA family. Homodimer.

It catalyses the reaction uridine(38/39/40) in tRNA = pseudouridine(38/39/40) in tRNA. Functionally, formation of pseudouridine at positions 38, 39 and 40 in the anticodon stem and loop of transfer RNAs. The chain is tRNA pseudouridine synthase A from Shewanella halifaxensis (strain HAW-EB4).